The following is a 67-amino-acid chain: Protein SlyX homolog (67 aa).

The protein belongs to the SlyX family.

The polypeptide is Protein SlyX homolog (Mesorhizobium japonicum (strain LMG 29417 / CECT 9101 / MAFF 303099) (Mesorhizobium loti (strain MAFF 303099))).